A 348-amino-acid polypeptide reads, in one-letter code: MILLQNIKRCSLKQLKVLATLLLSLSLPTLEAAENRDSDSIVWHLDYQEALQKSKEAELPLLVIFSGSDWNGPCMKIRKEVLESPEFIKRVQGKFVCVEVEYLKHRPQVENIRQQNLALKSKFKINELPCMILLSHEEREIYRIGSFGNETGSNLGDSLCHIVESDSLLRRAFPMMTSLSLSELQRYYRLAEELSHKEFLKHALELGVRSDDYFFLSEKFRLLVEVGKMDSEECQRIKKRLLNKDPKNEKQTHFTVALIEFQELAKRSRAGVRQDASQVIAPLESYISQFGQQDKDNLWRVEMMIAQFYLDSDQWHHALQHAEVAFEAAPNEVRSHISRSLEYIRHQS.

Positions 1–32 are cleaved as a signal peptide; that stretch reads MILLQNIKRCSLKQLKVLATLLLSLSLPTLEA.

The protein localises to the periplasm. The polypeptide is Thioredoxin-related protein DsbJ (dsbJ) (Chlamydia pneumoniae (Chlamydophila pneumoniae)).